A 1216-amino-acid polypeptide reads, in one-letter code: DNA-directed RNA polymerase subunit beta' (1216 aa).

Zn(2+)-binding residues include C60, C62, C75, and C78. Mg(2+) contacts are provided by D450, D452, and D454. C819, C893, C900, and C903 together coordinate Zn(2+).

The protein belongs to the RNA polymerase beta' chain family. In terms of assembly, the RNAP catalytic core consists of 2 alpha, 1 beta, 1 beta' and 1 omega subunit. When a sigma factor is associated with the core the holoenzyme is formed, which can initiate transcription. Mg(2+) serves as cofactor. Requires Zn(2+) as cofactor.

It catalyses the reaction RNA(n) + a ribonucleoside 5'-triphosphate = RNA(n+1) + diphosphate. DNA-dependent RNA polymerase catalyzes the transcription of DNA into RNA using the four ribonucleoside triphosphates as substrates. The protein is DNA-directed RNA polymerase subunit beta' of Streptococcus agalactiae serotype Ia (strain ATCC 27591 / A909 / CDC SS700).